Reading from the N-terminus, the 280-residue chain is Merozoite surface protein 2 (280 aa).

Positions 1–20 (MKVIKTLSIINFFIFVTFNI) are cleaved as a signal peptide. N-linked (GlcNAc...) asparagine glycosylation is found at asparagine 22 and asparagine 36. Residues 44–206 (ANEGSNTKSV…PQTAENENPA (163 aa)) are polymorphic region. The tract at residues 47–242 (GSNTKSVGAN…SQKECTDGNK (196 aa)) is disordered. Positions 51–74 (KSVGANAPKADTIASGSQSSTNSA) are 5 X 12 AA tandem repeats of P-P-I-T-T-T-E-S-N-S-R-S. A compositionally biased stretch (low complexity) spans 64-98 (ASGSQSSTNSASTSTTNNGESQTTTPTAADTPTAT). Residues 99 to 149 (ESNSRSPPITTTESNSRSPPITTTESNSRSPPITTTESNSRSPPITTTESN) show a composition bias toward polar residues. 4 repeat units span residues 105–116 (PPITTTESNSRS), 117–128 (PPITTTESNSRS), 129–140 (PPITTTESNSRS), and 141–152 (PPITTTESNSRS). Residues 150–163 (SRSPPITTTESSSS) are compositionally biased toward low complexity. One copy of the 5; partial repeat lies at 153–160 (PPITTTES). Residue asparagine 168 is glycosylated (N-linked (GlcNAc...) asparagine). Residues 170–182 (TDGKGEESEKQNE) are compositionally biased toward basic and acidic residues. Asparagine 184 and asparagine 229 each carry an N-linked (GlcNAc...) asparagine glycan. Residues 233–242 (SQKECTDGNK) are compositionally biased toward basic and acidic residues. Cysteine 237 and cysteine 245 are disulfide-bonded. 2 N-linked (GlcNAc...) asparagine glycosylation sites follow: asparagine 253 and asparagine 254. The GPI-anchor amidated asparagine moiety is linked to residue asparagine 254. The propeptide at 255–280 (SSNIASINKFVVLISATLVLSFAIFI) is removed in mature form.

The protein resides in the cell membrane. Functionally, may play a role in the merozoite attachment to the erythrocyte. The sequence is that of Merozoite surface protein 2 from Plasmodium falciparum (isolate K1 / Thailand).